The following is a 66-amino-acid chain: Large ribosomal subunit protein bL35 (66 aa).

Basic residues-rich tracts occupy residues 1–16 (MPKFKTHRASAKRFKK) and 23–45 (KRGHAYTSHRFHGKTKKQRRQLR). The interval 1–66 (MPKFKTHRAS…RIRQMLSQMK (66 aa)) is disordered.

Belongs to the bacterial ribosomal protein bL35 family.

This Lacticaseibacillus casei (strain BL23) (Lactobacillus casei) protein is Large ribosomal subunit protein bL35.